We begin with the raw amino-acid sequence, 112 residues long: Integration host factor subunit alpha (112 aa).

It belongs to the bacterial histone-like protein family. Heterodimer of an alpha and a beta chain.

Its function is as follows. This protein is one of the two subunits of integration host factor, a specific DNA-binding protein that functions in genetic recombination as well as in transcriptional and translational control. The protein is Integration host factor subunit alpha of Rhizobium leguminosarum bv. trifolii (strain WSM2304).